The sequence spans 174 residues: ATP-dependent protease subunit HslV (174 aa).

Thr-2 is a catalytic residue. The Na(+) site is built by Gly-157, Cys-160, and Thr-163.

This sequence belongs to the peptidase T1B family. HslV subfamily. A double ring-shaped homohexamer of HslV is capped on each side by a ring-shaped HslU homohexamer. The assembly of the HslU/HslV complex is dependent on binding of ATP.

It localises to the cytoplasm. It catalyses the reaction ATP-dependent cleavage of peptide bonds with broad specificity.. With respect to regulation, allosterically activated by HslU binding. Its function is as follows. Protease subunit of a proteasome-like degradation complex believed to be a general protein degrading machinery. The protein is ATP-dependent protease subunit HslV of Shewanella piezotolerans (strain WP3 / JCM 13877).